A 404-amino-acid chain; its full sequence is Cysteine desulfurase IscS (404 aa).

Residues 75-76 (AT), N155, Q183, and 203-205 (TGH) contribute to the pyridoxal 5'-phosphate site. Position 206 is an N6-(pyridoxal phosphate)lysine (K206). T243 provides a ligand contact to pyridoxal 5'-phosphate. C328 functions as the Cysteine persulfide intermediate in the catalytic mechanism. C328 contributes to the [2Fe-2S] cluster binding site.

The protein belongs to the class-V pyridoxal-phosphate-dependent aminotransferase family. NifS/IscS subfamily. Homodimer. Forms a heterotetramer with IscU, interacts with other sulfur acceptors. Pyridoxal 5'-phosphate is required as a cofactor.

It localises to the cytoplasm. It catalyses the reaction (sulfur carrier)-H + L-cysteine = (sulfur carrier)-SH + L-alanine. The protein operates within cofactor biosynthesis; iron-sulfur cluster biosynthesis. Functionally, master enzyme that delivers sulfur to a number of partners involved in Fe-S cluster assembly, tRNA modification or cofactor biosynthesis. Catalyzes the removal of elemental sulfur atoms from cysteine to produce alanine. Functions as a sulfur delivery protein for Fe-S cluster synthesis onto IscU, an Fe-S scaffold assembly protein, as well as other S acceptor proteins. This Cronobacter sakazakii (strain ATCC BAA-894) (Enterobacter sakazakii) protein is Cysteine desulfurase IscS.